We begin with the raw amino-acid sequence, 233 residues long: 3,4-dihydroxy-2-butanone 4-phosphate synthase (233 aa).

Position 37 (E37) interacts with Mg(2+). E37 contributes to the Mn(2+) binding site. D-ribulose 5-phosphate is bound at residue D41. S-glutathionyl cysteine is present on C66. Residues T92 and 150–154 contribute to the D-ribulose 5-phosphate site; that span reads RRGHT. H153 contacts Mg(2+). H153 serves as a coordination point for Mn(2+).

In terms of assembly, homodimer. Mg(2+) is required as a cofactor. Mn(2+) serves as cofactor. In terms of processing, S-glutathionylation is reversible and dependent on a glutaredoxin.

It catalyses the reaction D-ribulose 5-phosphate = (2S)-2-hydroxy-3-oxobutyl phosphate + formate + H(+). The protein operates within cofactor biosynthesis; riboflavin biosynthesis; 2-hydroxy-3-oxobutyl phosphate from D-ribulose 5-phosphate: step 1/1. Functionally, catalyzes the conversion of D-ribulose 5-phosphate to formate and 3,4-dihydroxy-2-butanone 4-phosphate. This Pyricularia oryzae (strain 70-15 / ATCC MYA-4617 / FGSC 8958) (Rice blast fungus) protein is 3,4-dihydroxy-2-butanone 4-phosphate synthase (RIB3).